We begin with the raw amino-acid sequence, 458 residues long: UDP-N-acetylmuramate--L-alanine ligase (458 aa).

An ATP-binding site is contributed by 118–124 (GTHGKTT).

This sequence belongs to the MurCDEF family.

The protein resides in the cytoplasm. It catalyses the reaction UDP-N-acetyl-alpha-D-muramate + L-alanine + ATP = UDP-N-acetyl-alpha-D-muramoyl-L-alanine + ADP + phosphate + H(+). Its pathway is cell wall biogenesis; peptidoglycan biosynthesis. In terms of biological role, cell wall formation. This Clostridium botulinum (strain Kyoto / Type A2) protein is UDP-N-acetylmuramate--L-alanine ligase.